A 138-amino-acid polypeptide reads, in one-letter code: MAKTIPRIGSRKNGRIGSRKNTRRIPKGVIHVQASFNNTIVTVTDVRGRVVSWSSAGTCGFKGTRRGTPFAAQTAAGNAIRTVVDQGMQRAEVMIKGPGLGRDAALRAIRRSGILLTFVRDVTPMPHNGCRPPKKRRV.

Residues 1-23 (MAKTIPRIGSRKNGRIGSRKNTR) form a disordered region. Basic residues predominate over residues 9-23 (GSRKNGRIGSRKNTR).

The protein belongs to the universal ribosomal protein uS11 family. Part of the 30S ribosomal subunit.

It is found in the plastid. Its subcellular location is the chloroplast. The protein is Small ribosomal subunit protein uS11c of Daucus carota (Wild carrot).